The sequence spans 194 residues: MNLIPMVVQQDGRGERAYDIYSRLLKDRIIFLGTPIDDEVANLIIAQLLFLESEDPDKEIFFYLNTPGGHISSGMAIYDTMRYIKPPVATVCVGQAASMGALLLAAGEQGKRSALPHSRILIHQPLGGFQGQATDIDIQAREILRLKDELSLILADLTNQPLDRIKTDTERDYYMTSQQAKEYGIIDEIIVKRS.

Catalysis depends on Ser-98, which acts as the Nucleophile. His-123 is a catalytic residue.

This sequence belongs to the peptidase S14 family. As to quaternary structure, fourteen ClpP subunits assemble into 2 heptameric rings which stack back to back to give a disk-like structure with a central cavity, resembling the structure of eukaryotic proteasomes.

It localises to the cytoplasm. The enzyme catalyses Hydrolysis of proteins to small peptides in the presence of ATP and magnesium. alpha-casein is the usual test substrate. In the absence of ATP, only oligopeptides shorter than five residues are hydrolyzed (such as succinyl-Leu-Tyr-|-NHMec, and Leu-Tyr-Leu-|-Tyr-Trp, in which cleavage of the -Tyr-|-Leu- and -Tyr-|-Trp bonds also occurs).. Cleaves peptides in various proteins in a process that requires ATP hydrolysis. Has a chymotrypsin-like activity. Plays a major role in the degradation of misfolded proteins. This Syntrophus aciditrophicus (strain SB) protein is ATP-dependent Clp protease proteolytic subunit.